The chain runs to 121 residues: Replication protein A 14 kDa subunit (121 aa).

Glycyl lysine isopeptide (Lys-Gly) (interchain with G-Cter in ubiquitin) cross-links involve residues K39 and K88.

This sequence belongs to the replication factor A protein 3 family. As to quaternary structure, component of the canonical replication protein A complex (RPA), a heterotrimer composed of RPA1, RPA2 and RPA3. Also a component of the aRPA, the alternative replication protein A complex, a trimeric complex similar to the replication protein A complex/RPA but where RPA1 and RPA3 are associated with RPA4 instead of RPA2. Post-translationally, ubiquitinated by RFWD3 at stalled replication forks in response to DNA damage: ubiquitination by RFWD3 does not lead to degradation by the proteasome and promotes removal of the RPA complex from stalled replication forks, promoting homologous recombination.

It is found in the nucleus. Functionally, as part of the heterotrimeric replication protein A complex (RPA/RP-A), binds and stabilizes single-stranded DNA intermediates, that form during DNA replication or upon DNA stress. It prevents their reannealing and in parallel, recruits and activates different proteins and complexes involved in DNA metabolism. Thereby, it plays an essential role both in DNA replication and the cellular response to DNA damage. In the cellular response to DNA damage, the RPA complex controls DNA repair and DNA damage checkpoint activation. Through recruitment of ATRIP activates the ATR kinase a master regulator of the DNA damage response. It is required for the recruitment of the DNA double-strand break repair factors RAD51 and RAD52 to chromatin, in response to DNA damage. Also recruits to sites of DNA damage proteins like XPA and XPG that are involved in nucleotide excision repair and is required for this mechanism of DNA repair. Also plays a role in base excision repair (BER), probably through interaction with UNG. Also recruits SMARCAL1/HARP, which is involved in replication fork restart, to sites of DNA damage. May also play a role in telomere maintenance. RPA3 has its own single-stranded DNA-binding activity and may be responsible for polarity of the binding of the complex to DNA. The chain is Replication protein A 14 kDa subunit (Rpa3) from Mus musculus (Mouse).